We begin with the raw amino-acid sequence, 559 residues long: Glutamine--tRNA ligase (559 aa).

A 'HIGH' region motif is present at residues 36-46; that stretch reads PEPNGYLHLGH. Residues 37–39 and 43–49 each bind ATP; these read EPN and HLGHAKS. The L-glutamine site is built by D69 and Y214. ATP is bound by residues T233, 263–264, and 271–273; these read RL and LSK. Residues 270 to 274 carry the 'KMSKS' region motif; it reads LLSKR.

The protein belongs to the class-I aminoacyl-tRNA synthetase family. As to quaternary structure, monomer.

The protein resides in the cytoplasm. The catalysed reaction is tRNA(Gln) + L-glutamine + ATP = L-glutaminyl-tRNA(Gln) + AMP + diphosphate. The protein is Glutamine--tRNA ligase of Nitrobacter winogradskyi (strain ATCC 25391 / DSM 10237 / CIP 104748 / NCIMB 11846 / Nb-255).